Consider the following 253-residue polypeptide: Phosphate import ATP-binding protein PstB 1 (253 aa).

Residues 7–248 (LTVSDLSLYY…PEKQETSDYI (242 aa)) enclose the ABC transporter domain. Residue 39-46 (GPSGCGKS) participates in ATP binding.

Belongs to the ABC transporter superfamily. Phosphate importer (TC 3.A.1.7) family. In terms of assembly, the complex is composed of two ATP-binding proteins (PstB), two transmembrane proteins (PstC and PstA) and a solute-binding protein (PstS).

It is found in the cell membrane. The enzyme catalyses phosphate(out) + ATP + H2O = ADP + 2 phosphate(in) + H(+). Functionally, part of the ABC transporter complex PstSACB involved in phosphate import. Responsible for energy coupling to the transport system. This Lactococcus lactis subsp. lactis (strain IL1403) (Streptococcus lactis) protein is Phosphate import ATP-binding protein PstB 1.